Consider the following 335-residue polypeptide: UPF0353 protein MAP_3435c (335 aa).

Helical transmembrane passes span 18–38 (WFFLALLAVLLVIGLYVVQQF) and 67–87 (VPTILLATSLVLLTTAMAGPT). A VWFA domain is found at 98 to 294 (VVMLVIDVSE…DSLKNVYSTL (197 aa)). A helical membrane pass occupies residues 309 to 329 (MAWMLLGAVVLAGAVLAGLLL).

This sequence belongs to the UPF0353 family.

Its subcellular location is the cell membrane. The sequence is that of UPF0353 protein MAP_3435c from Mycolicibacterium paratuberculosis (strain ATCC BAA-968 / K-10) (Mycobacterium paratuberculosis).